The chain runs to 157 residues: 2-C-methyl-D-erythritol 2,4-cyclodiphosphate synthase (157 aa).

Positions 8 and 10 each coordinate a divalent metal cation. 4-CDP-2-C-methyl-D-erythritol 2-phosphate is bound by residues 8–10 (DVH) and 34–35 (HS). His42 lines the a divalent metal cation pocket. Residues 56–58 (DIG), 61–65 (FPDTD), 100–106 (AQRPKMA), 132–135 (TTEE), and Phe139 each bind 4-CDP-2-C-methyl-D-erythritol 2-phosphate.

This sequence belongs to the IspF family. In terms of assembly, homotrimer. Requires a divalent metal cation as cofactor.

It catalyses the reaction 4-CDP-2-C-methyl-D-erythritol 2-phosphate = 2-C-methyl-D-erythritol 2,4-cyclic diphosphate + CMP. It participates in isoprenoid biosynthesis; isopentenyl diphosphate biosynthesis via DXP pathway; isopentenyl diphosphate from 1-deoxy-D-xylulose 5-phosphate: step 4/6. Its function is as follows. Involved in the biosynthesis of isopentenyl diphosphate (IPP) and dimethylallyl diphosphate (DMAPP), two major building blocks of isoprenoid compounds. Catalyzes the conversion of 4-diphosphocytidyl-2-C-methyl-D-erythritol 2-phosphate (CDP-ME2P) to 2-C-methyl-D-erythritol 2,4-cyclodiphosphate (ME-CPP) with a corresponding release of cytidine 5-monophosphate (CMP). This is 2-C-methyl-D-erythritol 2,4-cyclodiphosphate synthase from Trichlorobacter lovleyi (strain ATCC BAA-1151 / DSM 17278 / SZ) (Geobacter lovleyi).